The chain runs to 130 residues: Small ribosomal subunit protein uS11c (130 aa).

It belongs to the universal ribosomal protein uS11 family. As to quaternary structure, part of the 30S ribosomal subunit.

It is found in the plastid. The protein resides in the chloroplast. In Tupiella akineta (Green alga), this protein is Small ribosomal subunit protein uS11c.